The chain runs to 368 residues: Glutaminyl-peptide cyclotransferase (368 aa).

The signal sequence occupies residues 1-23; that stretch reads MAGERRDSKAAAFFCLAWALCLA. The N-linked (GlcNAc...) asparagine glycan is linked to Asn53. Cys143 and Cys169 are joined by a disulfide. Residue Asp164 participates in Zn(2+) binding. Glu207 functions as the Proton acceptor in the catalytic mechanism. Residue Glu208 coordinates Zn(2+). The active-site Proton acceptor is Asp254. N-linked (GlcNAc...) asparagine glycosylation is present at Asn292. His336 is a Zn(2+) binding site. N-linked (GlcNAc...) asparagine glycosylation is present at Asn352.

This sequence belongs to the glutaminyl-peptide cyclotransferase family. As to expression, expressed by the venom gland.

It localises to the secreted. The catalysed reaction is N-terminal L-glutaminyl-[peptide] = N-terminal 5-oxo-L-prolyl-[peptide] + NH4(+). Functionally, responsible for the biosynthesis of pyroglutamyl peptides. Has a bias against acidic and tryptophan residues adjacent to the N-terminal glutaminyl residue and a lack of importance of chain length after the second residue. Also catalyzes N-terminal pyroglutamate formation. The protein is Glutaminyl-peptide cyclotransferase (QPCT) of Boiga dendrophila (Mangrove snake).